Consider the following 82-residue polypeptide: Conotoxin MiK42 (82 aa).

The N-terminal stretch at 1–22 (MKLTCALIVAMLLLTACQLITT) is a signal peptide. The propeptide occupies 23–49 (DDFRGRQQYRTARSRTKMQNYKIFRLT). Intrachain disulfides connect Cys-52/Cys-67, Cys-59/Cys-70, and Cys-66/Cys-80.

The protein belongs to the conotoxin O1 superfamily. In terms of tissue distribution, expressed by the venom duct.

The protein resides in the secreted. The protein is Conotoxin MiK42 of Conus miles (Soldier cone).